The chain runs to 93 residues: Large ribosomal subunit protein uL23cz/uL23cy (93 aa).

Belongs to the universal ribosomal protein uL23 family. Part of the 50S ribosomal subunit.

It localises to the plastid. It is found in the chloroplast. In terms of biological role, binds to 23S rRNA. The polypeptide is Large ribosomal subunit protein uL23cz/uL23cy (rpl23-A) (Populus alba (White poplar)).